Consider the following 379-residue polypeptide: Putative acetyl-CoA C-acetyltransferase VraB (379 aa).

Catalysis depends on cysteine 86, which acts as the Acyl-thioester intermediate. Histidine 338 serves as the catalytic Proton acceptor.

This sequence belongs to the thiolase-like superfamily. Thiolase family.

The chain is Putative acetyl-CoA C-acetyltransferase VraB (vraB) from Staphylococcus aureus (strain MRSA252).